The sequence spans 239 residues: Ribosome assembly factor mrt4 (239 aa).

Belongs to the universal ribosomal protein uL10 family. As to quaternary structure, associates with the pre-60S ribosomal particle.

It is found in the nucleus. It localises to the nucleolus. The protein localises to the cytoplasm. Component of the ribosome assembly machinery. Nuclear paralog of the ribosomal protein P0, it binds pre-60S subunits at an early stage of assembly in the nucleolus, and is replaced by P0 in cytoplasmic pre-60S subunits and mature 80S ribosomes. The sequence is that of Ribosome assembly factor mrt4 from Candida glabrata (strain ATCC 2001 / BCRC 20586 / JCM 3761 / NBRC 0622 / NRRL Y-65 / CBS 138) (Yeast).